The chain runs to 888 residues: Kinesin-like protein KIF20A (888 aa).

Residue Ser2 is modified to N-acetylserine. Ser7, Ser14, and Ser21 each carry phosphoserine. The Kinesin motor domain occupies 63–506; it reads KVKVYLRVRP…AKFSAIASQL (444 aa). 159 to 166 contributes to the ATP binding site; the sequence is GVTNSGKT. Phosphoserine; by PLK1 is present on Ser527. Residue Ser531 is modified to Phosphoserine. Coiled coils occupy residues 559–587 and 630–760; these read KEELLQVVEAMKALLLKERQEKLRLEVQL and ESLT…ERAC. Ser667, Ser683, and Ser823 each carry phosphoserine. Residues 761-888 form a globular region; it reads CHNTGAGKLR…LKSGPFGKKY (128 aa). The disordered stretch occupies residues 823–863; that stretch reads STKKRLGANQENQQPNQQPPGKKPFLRNLLPRTPTCQSSTD. Thr855 carries the post-translational modification Phosphothreonine. Phosphoserine is present on residues Ser865, Ser876, and Ser881.

Belongs to the TRAFAC class myosin-kinesin ATPase superfamily. Kinesin family. In terms of processing, phosphorylated by PLK1 at Ser-527 during mitosis, creating a docking site for PLK1 and recruiting PLK1 at central spindle.

It localises to the golgi apparatus. Its subcellular location is the cytoplasm. The protein localises to the cytoskeleton. The protein resides in the spindle. In terms of biological role, mitotic kinesin required for chromosome passenger complex (CPC)-mediated cytokinesis. Following phosphorylation by PLK1, involved in recruitment of PLK1 to the central spindle. Interacts with guanosine triphosphate (GTP)-bound forms of RAB6A and RAB6B. May act as a motor required for the retrograde RAB6 regulated transport of Golgi membranes and associated vesicles along microtubules. Has a microtubule plus end-directed motility. This chain is Kinesin-like protein KIF20A (KIF20A), found in Bos taurus (Bovine).